We begin with the raw amino-acid sequence, 274 residues long: Long chain fatty acid elongase 5 (274 aa).

Residues 1 to 23 (MMDQILGTNFTYEGAKEVARGLE) lie on the Extracellular side of the membrane. Residues 24 to 44 (GFSAKLAVGYIATIFGLKYYM) form a helical membrane-spanning segment. Residues 45–61 (KDRKAFDLSTPLNIWNG) lie on the Cytoplasmic side of the membrane. A helical transmembrane segment spans residues 62–82 (ILSTFSLLGFLFTFPTLLSVI). Over 83–105 (RKDGFSHTYSHVSELYTDSTSGY) the chain is Extracellular. A helical membrane pass occupies residues 106–126 (WIFLWVISKIPELLDTVFIVL). Residues 127-129 (RKR) lie on the Cytoplasmic side of the membrane. A helical membrane pass occupies residues 130-150 (PLIFMHWYHHALTGYYALVCY). Residues 151 to 156 (HEDAVH) lie on the Extracellular side of the membrane. The chain crosses the membrane as a helical span at residues 157–177 (MVWVVWMNYIIHAFMYGYYLL). At 178–187 (KSLKVPIPPS) the chain is on the cytoplasmic side. A helical membrane pass occupies residues 188-208 (VAQAITTSQMVQFAVAIFAQV). Topologically, residues 209-227 (HVSYKHYVEGVEGLAYSFR) are extracellular. The helical transmembrane segment at 228 to 248 (GTAIGFFMLTTYFYLWIQFYK) threads the bilayer. Residues 249 to 274 (EHYLKNGGKKYNLAKDQAKTQTKKAN) are Cytoplasmic-facing.

It belongs to the ELO family. Expressed in the gut and unidentified head cells.

The protein resides in the membrane. The catalysed reaction is 11-methyldodecanoyl-CoA + malonyl-CoA + H(+) = 3-oxoisopentadecanoyl-CoA + CO2 + CoA. It catalyses the reaction isopentadecanoyl-CoA + malonyl-CoA + H(+) = 3-oxoisoheptadecanoyl-CoA + CO2 + CoA. It participates in lipid metabolism; fatty acid biosynthesis. Its function is as follows. Catalyzes the first and rate-limiting reaction of the four reactions that constitute the long-chain fatty acids elongation cycle. Uses malonyl-CoA to add 2 carbons per cycle to the chain of long-chain fatty acids. Condensing enzyme required for the formation of isopentadecanoate (C15iso) and isoheptadecanoate (C17iso), both play critical roles in animal development and growth. In Caenorhabditis elegans, this protein is Long chain fatty acid elongase 5.